We begin with the raw amino-acid sequence, 214 residues long: Adenylate kinase (214 aa).

ATP is bound at residue 10-15 (GGGKGT). An NMP region spans residues 30-59 (STGDMFRENVKGGTELGLKAKEYMDAGQLV). AMP is bound by residues threonine 31, arginine 36, 57-59 (QLV), 85-88 (GFPR), and glutamine 92. The LID stretch occupies residues 126-163 (GRRVCRVCGATFHVLFNAPKEDGKCDKCGGELYQRSDD). Arginine 127 serves as a coordination point for ATP. Zn(2+) contacts are provided by cysteine 130 and cysteine 133. Residue 136–137 (TF) participates in ATP binding. Zn(2+) contacts are provided by cysteine 150 and cysteine 153. Residues arginine 160 and arginine 171 each contribute to the AMP site. An ATP-binding site is contributed by glutamine 199.

It belongs to the adenylate kinase family. Monomer.

The protein resides in the cytoplasm. The catalysed reaction is AMP + ATP = 2 ADP. The protein operates within purine metabolism; AMP biosynthesis via salvage pathway; AMP from ADP: step 1/1. Catalyzes the reversible transfer of the terminal phosphate group between ATP and AMP. Plays an important role in cellular energy homeostasis and in adenine nucleotide metabolism. In Desulforudis audaxviator (strain MP104C), this protein is Adenylate kinase.